A 78-amino-acid chain; its full sequence is Apolipoprotein C-I (78 aa).

An N-terminal signal peptide occupies residues 1 to 26 (MRLILWLPVLVVVLLMVTEGPAPAQG).

This sequence belongs to the apolipoprotein C1 family.

The protein resides in the secreted. In terms of biological role, inhibitor of lipoprotein binding to the low density lipoprotein (LDL) receptor, LDL receptor-related protein, and very low density lipoprotein (VLDL) receptor. Associates with high density lipoproteins (HDL) and the triacylglycerol-rich lipoproteins in the plasma and makes up about 10% of the protein of the VLDL and 2% of that of HDL. Appears to interfere directly with fatty acid uptake and is also the major plasma inhibitor of cholesteryl ester transfer protein (CETP). Binds free fatty acids and reduces their intracellular esterification. Modulates the interaction of APOE with beta-migrating VLDL and inhibits binding of beta-VLDL to the LDL receptor-related protein. This chain is Apolipoprotein C-I (APOC1), found in Panthera tigris altaica (Siberian tiger).